A 314-amino-acid polypeptide reads, in one-letter code: Putative S-adenosyl-L-methionine-dependent methyltransferase MAV_0301 (314 aa).

S-adenosyl-L-methionine contacts are provided by residues aspartate 132 and 161-162 (DL).

Belongs to the UPF0677 family.

In terms of biological role, exhibits S-adenosyl-L-methionine-dependent methyltransferase activity. The chain is Putative S-adenosyl-L-methionine-dependent methyltransferase MAV_0301 from Mycobacterium avium (strain 104).